Here is a 431-residue protein sequence, read N- to C-terminus: MTRDLTITAVHLTPILVADPPLLNTQGVHQPYTPRLIVEVETADGVTGVGETYGDAKYLELARPFAAKLVGRQVSDLNGLFTLADEVAVDSSRVFGQVDVGGLRGVQTADKLRLSVVSGFEVACLDALGKALGLPVHALLGGKVRDAVEYSAYLFYKWADHPEGVASEKDDWGAAVDPAGVVAQARAFTERYGFTSFKLKGGVFPPEEEIAAVKALAEAFPGHPLRLDPNGAWSVETSLKVAAELGDVLEYLEDPALGTPAMAEVAAKTGVPLATNMCVTTFAEIQEAFTKGAVQVVLSDHHYWGGLRNTQQLAAVCRTFGVGVSMHSNTHLGISLAAMTHVAATVPDLHHACDSHYPWQSEDVLTERLAFDGGKVAVSDAPGLGVALDRERLAFLHRRWLDDDGTLRDRDDAAAMRVADPEWVTPSVPRW.

H29, T108, Y153, and K198 together coordinate substrate. The active-site Proton acceptor is K200. 2 residues coordinate Mg(2+): D228 and N276. Residues 228-230 (DPN), N276, 327-329 (HSN), H356, and R410 contribute to the substrate site. The active-site Proton acceptor is H327.

It belongs to the mandelate racemase/muconate lactonizing enzyme family. GlucD subfamily. It depends on Mg(2+) as a cofactor.

It carries out the reaction D-glucarate = 5-dehydro-4-deoxy-D-glucarate + H2O. The protein operates within carbohydrate acid metabolism; D-glucarate degradation; 2,5-dioxopentanoate from D-glucarate: step 1/2. Functionally, catalyzes the dehydration of glucarate to 5-keto-4-deoxy-D-glucarate (5-kdGluc). In Streptomyces coelicolor (strain ATCC BAA-471 / A3(2) / M145), this protein is Probable glucarate dehydratase (gudD).